The chain runs to 289 residues: Serine/threonine-protein phosphatase Pgam5, mitochondrial (289 aa).

The protein belongs to the phosphoglycerate mutase family. BPG-dependent PGAM subfamily. Interacts with Pk92B/ASK1.

The protein localises to the mitochondrion outer membrane. It carries out the reaction O-phospho-L-seryl-[protein] + H2O = L-seryl-[protein] + phosphate. The catalysed reaction is O-phospho-L-threonyl-[protein] + H2O = L-threonyl-[protein] + phosphate. In terms of biological role, displays phosphatase activity for serine/threonine residues, and dephosphorylates and activates Pk92B kinase. Has apparently no phosphoglycerate mutase activity. The polypeptide is Serine/threonine-protein phosphatase Pgam5, mitochondrial (Drosophila grimshawi (Hawaiian fruit fly)).